Here is a 695-residue protein sequence, read N- to C-terminus: Protein-glutamine gamma-glutamyltransferase 2 (695 aa).

Residues Cys272, His332, and Asp355 contribute to the active site. The Ca(2+) site is built by Asn395, Asp397, Glu434, Glu444, and Glu449. Residues 476–482 (SIKHAQP) and 578–581 (ANIP) contribute to the GTP site.

The protein belongs to the transglutaminase superfamily. Transglutaminase family. Monomer. Ca(2+) is required as a cofactor.

It localises to the cytoplasm. It is found in the cytosol. Its subcellular location is the nucleus. The protein localises to the chromosome. The protein resides in the secreted. It localises to the extracellular space. It is found in the extracellular matrix. Its subcellular location is the cell membrane. The protein localises to the mitochondrion. It catalyses the reaction L-glutaminyl-[protein] + L-lysyl-[protein] = [protein]-L-lysyl-N(6)-5-L-glutamyl-[protein] + NH4(+). The enzyme catalyses L-glutaminyl-[protein] + serotonin = 5-serotonyl-L-glutamyl-[protein] + NH4(+). The catalysed reaction is L-glutaminyl-[protein] + dopamine = 5-dopaminyl-L-glutamyl-[protein] + NH4(+). It carries out the reaction L-glutaminyl-[protein] + histamine = 5-histaminyl-L-glutamyl-[protein] + NH4(+). It catalyses the reaction L-glutaminyl-[protein] + (R)-noradrenaline = 5-(R)-noradrenalinyl-L-glutamyl-[protein] + NH4(+). The enzyme catalyses L-glutaminyl-[protein] + H2O = L-glutamyl-[protein] + NH4(+). With respect to regulation, acyltransferase activity is regulated by the binding of GTP and Ca(2+): inactivated by GTP, which stabilizes its closed structure, thereby obstructing the accessibility of substrates to the active sites. In contrast, Ca(2+) acts as a cofactor by inducing conformational change to the active open form. In absence of Ca(2+), Mg(2+) may bind Ca(2+)-binding sites, promoting GTP-binding and subsequent inhibition of the acyltransferase activity. Functionally, calcium-dependent acyltransferase that catalyzes the formation of covalent bonds between peptide-bound glutamine and various primary amines, such as gamma-amino group of peptide-bound lysine, or mono- and polyamines, thereby producing cross-linked or aminated proteins, respectively. Involved in many biological processes, such as bone development, angiogenesis, wound healing, cellular differentiation, chromatin modification and apoptosis. Acts as a protein-glutamine gamma-glutamyltransferase by mediating the cross-linking of proteins: under physiological conditions, the protein cross-linking activity is inhibited by GTP; inhibition is relieved by Ca(2+) in response to various stresses. When secreted, catalyzes cross-linking of proteins of the extracellular matrix, resulting in the formation of scaffolds. Plays a key role during apoptosis, both by (1) promoting the cross-linking of cytoskeletal proteins resulting in condensation of the cytoplasm, and by (2) mediating cross-linking proteins of the extracellular matrix, resulting in the irreversible formation of scaffolds that stabilize the integrity of the dying cells before their clearance by phagocytosis, thereby preventing the leakage of harmful intracellular components. In addition to protein cross-linking, can use different monoamine substrates to catalyze a vast array of protein post-translational modifications: mediates aminylation of serotonin, dopamine, noradrenaline or histamine into glutamine residues of target proteins to generate protein serotonylation, dopaminylation, noradrenalinylation or histaminylation, respectively. Mediates protein serotonylation of small GTPases during activation and aggregation of platelets, leading to constitutive activation of these GTPases. Plays a key role in chromatin organization by mediating serotonylation and dopaminylation of histone H3. Catalyzes serotonylation of 'Gln-5' of histone H3 (H3Q5ser) during serotonergic neuron differentiation, thereby facilitating transcription. Acts as a mediator of neurotransmission-independent role of nuclear dopamine in ventral tegmental area (VTA) neurons: catalyzes dopaminylation of 'Gln-5' of histone H3 (H3Q5dop), thereby regulating relapse-related transcriptional plasticity in the reward system. Also acts as a protein deamidase by mediating the side chain deamidation of specific glutamine residues of proteins to glutamate. May also act as an isopeptidase cleaving the previously formed cross-links. Also able to participate in signaling pathways independently of its acyltransferase activity: acts as a signal transducer in alpha-1 adrenergic receptor-mediated stimulation of phospholipase C-delta (PLCD) activity and is required for coupling alpha-1 adrenergic agonists to the stimulation of phosphoinositide lipid metabolism. This is Protein-glutamine gamma-glutamyltransferase 2 from Pagrus major (Red sea bream).